Reading from the N-terminus, the 203-residue chain is AFG2-interacting ribosome maturation factor (203 aa).

As to quaternary structure, part of the 55LCC heterohexameric ATPase complex composed at least of AIRIM, AFG2A, AFG2B and CINP. Does not associate with pre-60S ribosomal particles. In terms of processing, phosphorylated on serines by CK2 kinase.

It localises to the nucleus. The protein localises to the cytoplasm. In terms of biological role, part of the 55LCC heterohexameric ATPase complex which is chromatin-associated and promotes replisome proteostasis to maintain replication fork progression and genome stability. Required for replication fork progression, sister chromatid cohesion, and chromosome stability. The ATPase activity is specifically enhanced by replication fork DNA and is coupled to cysteine protease-dependent cleavage of replisome substrates in response to replication fork damage. Uses ATPase activity to process replisome substrates in S-phase, facilitating their proteolytic turnover from chromatin to ensure DNA replication and mitotic fidelity. Involved in the cytoplasmic maturation steps of pre-60S ribosomal particles by promoting the release of shuttling protein RSL24D1/RLP24 from the pre-ribosomal particles. This is AFG2-interacting ribosome maturation factor from Homo sapiens (Human).